The following is a 66-amino-acid chain: uncharacterized protein (66 aa).

2 helical membrane-spanning segments follow: residues 5–25 and 30–50; these read ALIV…PLVN and IMFG…VTPL.

The protein resides in the cell membrane. This is an uncharacterized protein from Bacillus subtilis (strain 168).